The chain runs to 126 residues: Protein ApaG (126 aa).

In terms of domain architecture, ApaG spans 2–126 (SDPRYQIDVS…FRLAVPGALH (125 aa)).

This chain is Protein ApaG, found in Azotobacter vinelandii (strain DJ / ATCC BAA-1303).